We begin with the raw amino-acid sequence, 511 residues long: ATP synthase subunit alpha (511 aa).

169–176 (GDRQTGKT) is an ATP binding site.

The protein belongs to the ATPase alpha/beta chains family. F-type ATPases have 2 components, CF(1) - the catalytic core - and CF(0) - the membrane proton channel. CF(1) has five subunits: alpha(3), beta(3), gamma(1), delta(1), epsilon(1). CF(0) has three main subunits: a(1), b(2) and c(9-12). The alpha and beta chains form an alternating ring which encloses part of the gamma chain. CF(1) is attached to CF(0) by a central stalk formed by the gamma and epsilon chains, while a peripheral stalk is formed by the delta and b chains.

It localises to the cell inner membrane. It catalyses the reaction ATP + H2O + 4 H(+)(in) = ADP + phosphate + 5 H(+)(out). Produces ATP from ADP in the presence of a proton gradient across the membrane. The alpha chain is a regulatory subunit. This is ATP synthase subunit alpha from Bartonella henselae (strain ATCC 49882 / DSM 28221 / CCUG 30454 / Houston 1) (Rochalimaea henselae).